Reading from the N-terminus, the 367-residue chain is Palmitoyltransferase ERF2 (367 aa).

Residues 1-23 (MRLHSRQASNPHRQYSAAQSLHS) are compositionally biased toward polar residues. The interval 1-32 (MRLHSRQASNPHRQYSAAQSLHSSSDDSEHKE) is disordered. Residues 1-87 (MRLHSRQASN…GRLRTVAKTK (87 aa)) lie on the Cytoplasmic side of the membrane. The chain crosses the membrane as a helical span at residues 88–108 (YLSVLVLVMLIAPIVLFSVFE). Residues 109-121 (TGYLWKHVAGAKP) are Lumenal-facing. A helical transmembrane segment spans residues 122–142 (CVVLCYYFWTLCFASFISTGA). Topologically, residues 143-229 (TDPGTLPRNI…NCIGQRNHRY (87 aa)) are cytoplasmic. The 51-residue stretch at 185-235 (KYCTTCRIWRPPRASHCAVCDSCILSFDHHCDWLNNCIGQRNHRYFLAFLF) folds into the DHHC domain. Cysteine 215 functions as the S-palmitoyl cysteine intermediate in the catalytic mechanism. A helical membrane pass occupies residues 230 to 250 (FLAFLFSSVLSSIWLLTCCAL). Residues 251-262 (KLRHAGSPSAAP) are Lumenal-facing. The chain crosses the membrane as a helical span at residues 263 to 283 (VSLLLICYCAVSIWYPLLLAI). The Cytoplasmic portion of the chain corresponds to 284–367 (YHLFLTGTQQ…LPIPHSFEKV (84 aa)).

This sequence belongs to the DHHC palmitoyltransferase family. ERF2/ZDHHC9 subfamily. As to quaternary structure, interacts with ERF4. Autopalmitoylated.

It localises to the endoplasmic reticulum membrane. The enzyme catalyses L-cysteinyl-[protein] + hexadecanoyl-CoA = S-hexadecanoyl-L-cysteinyl-[protein] + CoA. In terms of biological role, the ERF2-ERF4 complex is a palmitoyltransferase specific for Ras proteins. The polypeptide is Palmitoyltransferase ERF2 (ERF2) (Eremothecium gossypii (strain ATCC 10895 / CBS 109.51 / FGSC 9923 / NRRL Y-1056) (Yeast)).